Consider the following 202-residue polypeptide: MEAFTTHTGIGVPLRQSNVDTDQIIPAVYLKRITRTGFEDALFAAWRKDESFILNQAPFNAGSVLVAGPDFGTGSSREHAVWALKDYGFKAVLSSRFADIFRGNSGKQGLLAAQVAQDDIELIWKVLENHPGTEIKVDLVSKTVECGNVVAPFEIDDYTRWRLLEGLDDIGLTLQHEADITAYEATRPSFKPKTLPAKVQAQ.

This sequence belongs to the LeuD family. LeuD type 1 subfamily. As to quaternary structure, heterodimer of LeuC and LeuD.

The enzyme catalyses (2R,3S)-3-isopropylmalate = (2S)-2-isopropylmalate. The protein operates within amino-acid biosynthesis; L-leucine biosynthesis; L-leucine from 3-methyl-2-oxobutanoate: step 2/4. Catalyzes the isomerization between 2-isopropylmalate and 3-isopropylmalate, via the formation of 2-isopropylmaleate. The polypeptide is 3-isopropylmalate dehydratase small subunit (Paenarthrobacter aurescens (strain TC1)).